A 283-amino-acid polypeptide reads, in one-letter code: Probable replication-associated protein repA1 (283 aa).

Belongs to the IncFII RepA family.

This protein is essential for plasmid replication; it is involved in copy control functions. The chain is Probable replication-associated protein repA1 (repA1) from Buchnera aphidicola subsp. Acyrthosiphon pisum (strain APS) (Acyrthosiphon pisum symbiotic bacterium).